A 127-amino-acid polypeptide reads, in one-letter code: Small ribosomal subunit protein uS11 (127 aa).

The protein belongs to the universal ribosomal protein uS11 family. In terms of assembly, part of the 30S ribosomal subunit. Interacts with proteins S7 and S18. Binds to IF-3.

Located on the platform of the 30S subunit, it bridges several disparate RNA helices of the 16S rRNA. Forms part of the Shine-Dalgarno cleft in the 70S ribosome. This Chlorobium phaeobacteroides (strain BS1) protein is Small ribosomal subunit protein uS11.